Consider the following 20-residue polypeptide: Implantin (20 aa).

Belongs to the EF-1-beta/EF-1-delta family. Phosphorylated. In terms of tissue distribution, uterus and embryo.

The protein localises to the cytoplasm. It is found in the nucleus. Binds DNA. This Mus musculus (Mouse) protein is Implantin.